The following is a 133-amino-acid chain: S-adenosylmethionine decarboxylase proenzyme (133 aa).

Ser-65 functions as the Schiff-base intermediate with substrate; via pyruvic acid in the catalytic mechanism. Residue Ser-65 is modified to Pyruvic acid (Ser); by autocatalysis. The active-site Proton acceptor; for processing activity is the His-70. The Proton donor; for catalytic activity role is filled by Cys-85.

It belongs to the prokaryotic AdoMetDC family. Type 1 subfamily. In terms of assembly, heterotetramer of two alpha and two beta chains arranged as a dimer of alpha/beta heterodimers. Pyruvate serves as cofactor. Post-translationally, is synthesized initially as an inactive proenzyme. Formation of the active enzyme involves a self-maturation process in which the active site pyruvoyl group is generated from an internal serine residue via an autocatalytic post-translational modification. Two non-identical subunits are generated from the proenzyme in this reaction, and the pyruvate is formed at the N-terminus of the alpha chain, which is derived from the carboxyl end of the proenzyme. The post-translation cleavage follows an unusual pathway, termed non-hydrolytic serinolysis, in which the side chain hydroxyl group of the serine supplies its oxygen atom to form the C-terminus of the beta chain, while the remainder of the serine residue undergoes an oxidative deamination to produce ammonia and the pyruvoyl group blocking the N-terminus of the alpha chain.

The enzyme catalyses S-adenosyl-L-methionine + H(+) = S-adenosyl 3-(methylsulfanyl)propylamine + CO2. It functions in the pathway amine and polyamine biosynthesis; S-adenosylmethioninamine biosynthesis; S-adenosylmethioninamine from S-adenosyl-L-methionine: step 1/1. Functionally, catalyzes the decarboxylation of S-adenosylmethionine to S-adenosylmethioninamine (dcAdoMet), the propylamine donor required for the synthesis of the polyamines spermine and spermidine from the diamine putrescine. The polypeptide is S-adenosylmethionine decarboxylase proenzyme (Brevibacillus brevis (strain 47 / JCM 6285 / NBRC 100599)).